The sequence spans 205 residues: H/ACA ribonucleoprotein complex subunit GAR1 (205 aa).

Residues 1–23 (MSFRGGNRGGRGGFRGGFRGGRT) show a composition bias toward gly residues. Residues 1 to 31 (MSFRGGNRGGRGGFRGGFRGGRTGSARSFQQ) are disordered. Arg4 is subject to Asymmetric dimethylarginine; by HMT1. The segment at 4-21 (RGGNRGGRGGFRGGFRGG) is RGG-box 1. Arg8 is modified (asymmetric dimethylarginine; by HMT1; alternate). At Arg8 the chain carries Omega-N-methylarginine; by HMT1; alternate. The residue at position 11 (Arg11) is an Asymmetric dimethylarginine; by HMT1. Arg15 is subject to Asymmetric dimethylarginine; by HMT1; alternate. Arg15 bears the Omega-N-methylarginine; by HMT1; alternate mark. At Arg19 the chain carries Asymmetric dimethylarginine; by HMT1. Lys77 is covalently cross-linked (Glycyl lysine isopeptide (Lys-Gly) (interchain with G-Cter in ubiquitin)). Residues 124 to 205 (PKPKVVGPPK…SRGGFRGGRR (82 aa)) form a disordered region. Residues 143 to 205 (APGGRGGASM…SRGGFRGGRR (63 aa)) show a composition bias toward gly residues. 3 positions are modified to asymmetric dimethylarginine; by HMT1; alternate: Arg147, Arg154, and Arg158. Omega-N-methylarginine; by HMT1; alternate is present on residues Arg147, Arg154, and Arg158. The tract at residues 147–205 (RGGASMGRGGSRGGFRGGRGGSSFRGGRGGSSFRGGSRGGSFRGGSRGGSRGGFRGGRR) is RGG-box 2. Position 162 is an asymmetric dimethylarginine; by HMT1 (Arg162). Arg165 is subject to Asymmetric dimethylarginine; by HMT1; alternate. Arg165 carries the omega-N-methylarginine; by HMT1; alternate modification. Arg171 and Arg174 each carry asymmetric dimethylarginine; by HMT1. Arg180 and Arg184 each carry omega-N-methylarginine; by HMT1. An Asymmetric dimethylarginine; by HMT1; alternate modification is found at Arg189. Residue Arg189 is modified to Omega-N-methylarginine; by HMT1; alternate. An asymmetric dimethylarginine; by HMT1 mark is found at Arg193, Arg197, and Arg201.

The protein belongs to the GAR1 family. In terms of assembly, component of the small nucleolar ribonucleoprotein particles containing H/ACA-type snoRNAs (H/ACA snoRNPs). The protein component of the H/ACA snoRNP contains CBF5, GAR1, NHP2 and NOP10. The complex contains a stable core composed of CBF5 and NOP10, to which GAR1 and NHP2 subsequently bind. Interacts with snoRNAs. Post-translationally, methylated by HMT1, forming asymmetric dimethylarginines (DMA) within a domain referred to as an RGG box, made up of repeated Gly-Gly dipeptides interspersed with Arg and aromatic residues.

It is found in the nucleus. The protein resides in the nucleolus. Functionally, non-catalytic component of the H/ACA small nucleolar ribonucleoprotein (H/ACA snoRNP), which catalyzes pseudouridylation of rRNA and is required for ribosome biogenesis. This involves the isomerization of uridine such that the ribose is subsequently attached to C5, instead of the normal N1. Pseudouridine ('psi') residues may serve to stabilize the conformation of rRNAs. The H/ACA snoRNP complex also mediates pseudouridylation of other types of RNAs. The H/ACA snoRNP complex mediates pseudouridylation at position 93 in U2 snRNA. Essential for growth. The sequence is that of H/ACA ribonucleoprotein complex subunit GAR1 from Saccharomyces cerevisiae (strain ATCC 204508 / S288c) (Baker's yeast).